The primary structure comprises 90 residues: Small ribosomal subunit protein bS16 (90 aa).

It belongs to the bacterial ribosomal protein bS16 family.

The chain is Small ribosomal subunit protein bS16 from Lactococcus lactis subsp. cremoris (strain SK11).